A 106-amino-acid polypeptide reads, in one-letter code: Small ribosomal subunit protein bS20 (106 aa).

Positions 1 to 20 (MATAKPKKKNPRLASGRKRV) are enriched in basic residues. The interval 1 to 21 (MATAKPKKKNPRLASGRKRVR) is disordered.

The protein belongs to the bacterial ribosomal protein bS20 family.

Its function is as follows. Binds directly to 16S ribosomal RNA. In Polaromonas naphthalenivorans (strain CJ2), this protein is Small ribosomal subunit protein bS20.